The chain runs to 305 residues: MLKQRTIKQIVKTVGIGLHSGRKVNLTLRPAAPDTGIVFCRVDLPTPVDIPASAMAIGDTRLASVLQKDGARVSTIEHLMSACAGLGIDNLYVDVTAEEIPIMDGSAASFVFLIQSAGIEEQNAAKKFIKVTKPVEIRDGDKFARLDPYFGFKLKFTIDFRHPAVDKTGQALEVDFANTSYVREIARARTFGFAHEVEMMRELGLARGGSMDNAIVLDEYRILNNDGLRYDDEFVKHKMLDAIGDLYVVGHPLLAAYDAYKSGHGLNNALLRELLAHEDSYEIVTFDDPLKAPRGFAYDTQTAFA.

Residues His-78, His-237, and Asp-241 each contribute to the Zn(2+) site. Catalysis depends on His-264, which acts as the Proton donor.

Belongs to the LpxC family. Requires Zn(2+) as cofactor.

The catalysed reaction is a UDP-3-O-[(3R)-3-hydroxyacyl]-N-acetyl-alpha-D-glucosamine + H2O = a UDP-3-O-[(3R)-3-hydroxyacyl]-alpha-D-glucosamine + acetate. The protein operates within glycolipid biosynthesis; lipid IV(A) biosynthesis; lipid IV(A) from (3R)-3-hydroxytetradecanoyl-[acyl-carrier-protein] and UDP-N-acetyl-alpha-D-glucosamine: step 2/6. Functionally, catalyzes the hydrolysis of UDP-3-O-myristoyl-N-acetylglucosamine to form UDP-3-O-myristoylglucosamine and acetate, the committed step in lipid A biosynthesis. The protein is UDP-3-O-acyl-N-acetylglucosamine deacetylase of Paraburkholderia phymatum (strain DSM 17167 / CIP 108236 / LMG 21445 / STM815) (Burkholderia phymatum).